The following is a 638-amino-acid chain: Neuroendocrine convertase 2 (638 aa).

Residues 1–25 (MKGGCVSQWKAAAGFLFCVMVFASA) form the signal peptide. A propeptide spanning residues 26–109 (ERPVFTNHFL…QQEGFDRKKR (84 aa)) is cleaved from the precursor. The Peptidase S8 domain maps to 129 to 453 (QWYLINTGQA…YGVLDAGAMV (325 aa)). Catalysis depends on charge relay system residues Asp-167 and His-208. Intrachain disulfides connect Cys-225-Cys-376 and Cys-317-Cys-347. N-linked (GlcNAc...) asparagine glycosylation is present at Asn-375. Ser-384 functions as the Charge relay system in the catalytic mechanism. A P/Homo B domain is found at 461-597 (TVPERFHCVG…TLMLHGTQSA (137 aa)). The cysteines at positions 468 and 494 are disulfide-linked. N-linked (GlcNAc...) asparagine glycans are attached at residues Asn-514 and Asn-524.

It belongs to the peptidase S8 family. Furin subfamily.

The protein resides in the cytoplasmic vesicle. It localises to the secretory vesicle. It is found in the secreted. The enzyme catalyses Release of protein hormones and neuropeptides from their precursors, generally by hydrolysis of -Lys-Arg-|- bonds.. Functionally, serine endopeptidase which is involved in the processing of hormone and other protein precursors at sites comprised of pairs of basic amino acid residues. Responsible for the release of glucagon from proglucagon in pancreatic A cells. The protein is Neuroendocrine convertase 2 (PCSK2) of Homo sapiens (Human).